Reading from the N-terminus, the 471-residue chain is Tryptophanase (471 aa).

Residue Lys256 is modified to N6-(pyridoxal phosphate)lysine.

Belongs to the beta-eliminating lyase family. As to quaternary structure, homotetramer. Pyridoxal 5'-phosphate is required as a cofactor.

It catalyses the reaction L-tryptophan + H2O = indole + pyruvate + NH4(+). Its pathway is amino-acid degradation; L-tryptophan degradation via pyruvate pathway; indole and pyruvate from L-tryptophan: step 1/1. The polypeptide is Tryptophanase (Salinibacter ruber (strain DSM 13855 / M31)).